The primary structure comprises 564 residues: Adenine deaminase (564 aa).

Belongs to the metallo-dependent hydrolases superfamily. Adenine deaminase family. Mn(2+) is required as a cofactor.

It carries out the reaction adenine + H2O + H(+) = hypoxanthine + NH4(+). The sequence is that of Adenine deaminase from Deinococcus geothermalis (strain DSM 11300 / CIP 105573 / AG-3a).